Here is a 103-residue protein sequence, read N- to C-terminus: Large ribosomal subunit protein bL21 (103 aa).

This sequence belongs to the bacterial ribosomal protein bL21 family. As to quaternary structure, part of the 50S ribosomal subunit. Contacts protein L20.

In terms of biological role, this protein binds to 23S rRNA in the presence of protein L20. The sequence is that of Large ribosomal subunit protein bL21 from Pseudomonas syringae pv. tomato (strain ATCC BAA-871 / DC3000).